The sequence spans 110 residues: Envelope glycoprotein N (110 aa).

Residues 1 to 17 form the signal peptide; sequence MTASTVALALFVASILG. Residues 18-80 lie on the Virion surface side of the membrane; it reads HCWVTANSTG…SLSSFSSVWA (63 aa). Polar residues predominate over residues 28–41; the sequence is VASSTERSSPSTAG. The disordered stretch occupies residues 28–51; sequence VASSTERSSPSTAGLSARPSPGPT. The chain crosses the membrane as a helical span at residues 81-101; it reads LINALLVVVATFFYLVYLCFF. Over 102 to 110 the chain is Intravirion; sequence KFVDEVVHA.

Belongs to the herpesviridae glycoprotein N family. Interacts (via N-terminus) with gM (via N-terminus). The gM-gN heterodimer forms the gCII complex. O-glycosylated. Contains alpha 2,6-sialic acid residues. N-glycosylated.

It localises to the virion membrane. The protein resides in the host membrane. Its subcellular location is the host Golgi apparatus. It is found in the host trans-Golgi network. Functionally, envelope glycoprotein necessary for proper maturation of gM and modulation of its membrane fusion activity. Also plays a critical role in virion morphogenesis. In Homo sapiens (Human), this protein is Envelope glycoprotein N.